A 155-amino-acid polypeptide reads, in one-letter code: Cathelicidin-1 (155 aa).

Positions 1 to 29 are cleaved as a signal peptide; it reads METQRASLSLGRCSLWLLLLGLALPSASA. Glutamine 30 is modified (pyrrolidone carboxylic acid). A propeptide spanning residues 30–143 is cleaved from the precursor; it reads QVLSYREAVL…KQPWAPPQAA (114 aa). 3 disulfides stabilise this stretch: cysteine 85/cysteine 96, cysteine 107/cysteine 124, and cysteine 146/cysteine 154.

Belongs to the cathelicidin family.

It is found in the secreted. Potent microbicidal activity; active against S.aureus and E.coli. This Ovis aries (Sheep) protein is Cathelicidin-1 (CATHL1A).